A 46-amino-acid chain; its full sequence is Iota-conotoxin-like R11.7 (46 aa).

4-hydroxyproline is present on residues Pro-2 and Pro-11. Cystine bridges form between Cys-5–Cys-19, Cys-12–Cys-22, Cys-18–Cys-27, and Cys-21–Cys-38. 4-hydroxyproline is present on Pro-29. Phe-44 is modified (D-phenylalanine).

It belongs to the conotoxin I1 superfamily. In terms of tissue distribution, expressed by the venom duct.

The protein resides in the secreted. Iota-conotoxins bind to voltage-gated sodium channels (Nav) and act as agonists by shifting the voltage-dependence of activation to more hyperpolarized levels. Produces general excitatory symptoms. This is Iota-conotoxin-like R11.7 from Conus radiatus (Rayed cone).